The sequence spans 87 residues: MRFILSLPVLAVVLAMVLEGPAPAQADPDISSSLESIPGKLKEFGSTVEEKFRTAIDQIKKSEFSEKTQNWFSELFHKVKEKFETTF.

The first 26 residues, 1–26 (MRFILSLPVLAVVLAMVLEGPAPAQA), serve as a signal peptide directing secretion.

This sequence belongs to the apolipoprotein C1 family.

The protein resides in the secreted. Functionally, inhibitor of lipoprotein binding to the low density lipoprotein (LDL) receptor, LDL receptor-related protein, and very low density lipoprotein (VLDL) receptor. Associates with high density lipoproteins (HDL) and the triacylglycerol-rich lipoproteins in the plasma and makes up about 10% of the protein of the VLDL and 2% of that of HDL. Appears to interfere directly with fatty acid uptake and is also the major plasma inhibitor of cholesteryl ester transfer protein (CETP). Binds free fatty acids and reduces their intracellular esterification. Modulates the interaction of APOE with beta-migrating VLDL and inhibits binding of beta-VLDL to the LDL receptor-related protein. This chain is Apolipoprotein C-I (APOC1), found in Pteropus alecto (Black flying fox).